Consider the following 299-residue polypeptide: 6-phosphogluconate dehydrogenase, NAD(+)-dependent, decarboxylating (299 aa).

NAD(+) is bound by residues 7–12 (GLGRMG), 67–69 (VPA), and Asn-95. Asn-95, Ser-118, and Gly-120 together coordinate substrate. Lys-169 acts as the Proton acceptor in catalysis. 172-173 (HN) contacts substrate. Catalysis depends on Glu-176, which acts as the Proton donor. The substrate site is built by Tyr-177 and Arg-268.

This sequence belongs to the 6-phosphogluconate dehydrogenase family. In terms of assembly, homotetramer.

It carries out the reaction 6-phospho-D-gluconate + NAD(+) = D-ribulose 5-phosphate + CO2 + NADH. The protein operates within carbohydrate degradation; pentose phosphate pathway. Catalyzes the oxidative decarboxylation of 6-phosphogluconate to ribulose 5-phosphate and CO(2), with concomitant reduction of NAD to NADH. The protein is 6-phosphogluconate dehydrogenase, NAD(+)-dependent, decarboxylating of Haloferax volcanii (strain ATCC 29605 / DSM 3757 / JCM 8879 / NBRC 14742 / NCIMB 2012 / VKM B-1768 / DS2) (Halobacterium volcanii).